Consider the following 218-residue polypeptide: Large ribosomal subunit protein uL1 (218 aa).

The protein belongs to the universal ribosomal protein uL1 family. As to quaternary structure, part of the 50S ribosomal subunit.

Functionally, probably involved in E site tRNA release. Binds directly to 23S rRNA. Its function is as follows. Protein L1 is also a translational repressor protein, it controls the translation of its operon by binding to its mRNA. The sequence is that of Large ribosomal subunit protein uL1 from Saccharolobus solfataricus (strain ATCC 35092 / DSM 1617 / JCM 11322 / P2) (Sulfolobus solfataricus).